Reading from the N-terminus, the 90-residue chain is uncharacterized protein (90 aa).

Residues 36-82 adopt a coiled-coil conformation; sequence DQEYSDAQMQLEDAVNALNKLWLSSNDQQREQLYRMRLQLQSLQNNM.

This is an uncharacterized protein from Bacillus subtilis (strain 168).